An 879-amino-acid polypeptide reads, in one-letter code: Protein translocase subunit SecA (879 aa).

ATP-binding positions include Gln-87, Gly-105 to Thr-109, and Asp-509. The segment at Ile-834 to Ala-879 is disordered. Zn(2+)-binding residues include Cys-856, Cys-858, Cys-867, and Cys-868.

It belongs to the SecA family. As to quaternary structure, monomer and homodimer. Part of the essential Sec protein translocation apparatus which comprises SecA, SecYEG and auxiliary proteins SecDF-YajC and YidC. Zn(2+) serves as cofactor.

It is found in the cell inner membrane. The protein localises to the cytoplasm. It catalyses the reaction ATP + H2O + cellular proteinSide 1 = ADP + phosphate + cellular proteinSide 2.. Functionally, part of the Sec protein translocase complex. Interacts with the SecYEG preprotein conducting channel. Has a central role in coupling the hydrolysis of ATP to the transfer of proteins into and across the cell membrane, serving as an ATP-driven molecular motor driving the stepwise translocation of polypeptide chains across the membrane. In Sulfurovum sp. (strain NBC37-1), this protein is Protein translocase subunit SecA.